We begin with the raw amino-acid sequence, 173 residues long: Lens fiber membrane intrinsic protein (173 aa).

Residues 1–3 are Cytoplasmic-facing; that stretch reads MYS. The helical transmembrane segment at 4-24 threads the bilayer; the sequence is FMGGGLFCAWVGTILLVVATA. Residues 25 to 66 lie on the Extracellular side of the membrane; sequence TDHWMQYRLSGAFAHQGLWRYCLGTKCYLQTESIAYWNATRA. C-linked (Man) tryptophan; partial glycosylation is found at Trp-43 and Trp-61. Residues 67-87 traverse the membrane as a helical segment; it reads FMILSSLCATSGIIMGIVAFA. At 88–98 the chain is on the cytoplasmic side; that stretch reads QQPTFTRLSRP. A helical membrane pass occupies residues 99 to 119; the sequence is FSAGIMFFASTFFVLLALAIY. At 120–140 the chain is on the extracellular side; that stretch reads TGVTVSFLGRRFGDWRFSWSY. A helical membrane pass occupies residues 141-161; that stretch reads ILGWVALLMTFFAGIFYMCAY. The Cytoplasmic portion of the chain corresponds to 162 to 173; sequence RMHECRRLSTPR. Position 170 is a phosphoserine (Ser-170). Residue Thr-171 is modified to Phosphothreonine.

This sequence belongs to the PMP-22/EMP/MP20 family. Seems to be associated with itself or another lens membrane component via disulfide bonds. Predominantly monophosphorylated on Ser-170. Only about 15% diphosphorylated on both Ser-170 and Thr-171. In terms of processing, C-glycosylated. Trp-43 is more extensively C-glycosylated than Trp-61. C-glycosylation may be involved in membrane trafficking. As to expression, eye lens specific.

Its subcellular location is the membrane. Functionally, present in the thicker 16-17 nm junctions of mammalian lens fiber cells, where it may contribute to cell junctional organization. Acts as a receptor for calmodulin. May play an important role in both lens development and cataractogenesis. The sequence is that of Lens fiber membrane intrinsic protein (LIM2) from Bos taurus (Bovine).